Consider the following 356-residue polypeptide: Protein-arginine kinase (356 aa).

Residues 22–249 enclose the Phosphagen kinase C-terminal domain; the sequence is FRPISTLSLS…SKILSAETEA (228 aa). Residues 25 to 29, 172 to 176, and 202 to 207 contribute to the ATP site; these read ISTLS, VARAF, and SSLLPL.

This sequence belongs to the ATP:guanido phosphotransferase family.

The catalysed reaction is L-arginyl-[protein] + ATP = N(omega)-phospho-L-arginyl-[protein] + ADP + H(+). Catalyzes the specific phosphorylation of arginine residues in proteins. This chain is Protein-arginine kinase, found in Chlamydia muridarum (strain MoPn / Nigg).